The chain runs to 238 residues: tRNA (guanine-N(7)-)-methyltransferase (238 aa).

S-adenosyl-L-methionine contacts are provided by Glu68, Glu93, Asp120, and Asp143. Residue Asp143 is part of the active site. Substrate is bound by residues Lys147, Asp179, and 216-219; that span reads TKFE.

Belongs to the class I-like SAM-binding methyltransferase superfamily. TrmB family.

The catalysed reaction is guanosine(46) in tRNA + S-adenosyl-L-methionine = N(7)-methylguanosine(46) in tRNA + S-adenosyl-L-homocysteine. It participates in tRNA modification; N(7)-methylguanine-tRNA biosynthesis. Catalyzes the formation of N(7)-methylguanine at position 46 (m7G46) in tRNA. This is tRNA (guanine-N(7)-)-methyltransferase from Stutzerimonas stutzeri (strain A1501) (Pseudomonas stutzeri).